Here is a 1820-residue protein sequence, read N- to C-terminus: uncharacterized protein (1820 aa).

Disordered stretches follow at residues Met-1 to Gly-73, Thr-86 to Ala-158, Gly-226 to Tyr-260, Glu-286 to Glu-366, Asp-453 to Ser-497, Leu-519 to Ala-548, Gly-577 to Pro-597, Gly-619 to Gly-689, and His-735 to Ser-830. The segment covering Asn-20–Asn-31 has biased composition (polar residues). Over residues Thr-86–His-128 the composition is skewed to low complexity. Residues His-129–Thr-146 are compositionally biased toward basic residues. Over residues Ser-247–Asn-259 the composition is skewed to low complexity. Residues Val-265–Lys-308 are a coiled coil. The span at Asp-294–Glu-305 shows a compositional bias: basic and acidic residues. Over residues Ala-346 to Gly-358 the composition is skewed to low complexity. A coiled-coil region spans residues Thr-362–Gln-438. The segment covering Asp-453–Asn-463 has biased composition (polar residues). 2 positions are modified to phosphoserine: Ser-542 and Ser-543. Positions Gly-623–Ser-632 are enriched in low complexity. Positions His-655–Thr-669 are enriched in gly residues. The segment covering Asn-738 to Ala-769 has biased composition (low complexity). The span at Gln-787–Gly-818 shows a compositional bias: polar residues. PH domains follow at residues Ser-909–Arg-1003 and Lys-1017–Gly-1124. Ser-1073, Ser-1075, and Ser-1077 each carry phosphoserine. Positions His-1159–Leu-1378 constitute a MyTH4 domain. The FERM domain occupies His-1389–Val-1712. 2 disordered regions span residues Pro-1713–Phe-1748 and Ala-1764–Lys-1820. The span at Gly-1714–Asn-1724 shows a compositional bias: polar residues. Over residues Ala-1764–His-1781 the composition is skewed to low complexity. Basic and acidic residues predominate over residues His-1805 to Lys-1820.

This is an uncharacterized protein from Drosophila melanogaster (Fruit fly).